A 454-amino-acid polypeptide reads, in one-letter code: Putative serine/threonine-protein phosphatase C27B7.6 (454 aa).

Positions 65, 67, 93, and 125 each coordinate Mn(2+). The active-site Proton donor is H126. Residues H174 and H252 each contribute to the Mn(2+) site. The disordered stretch occupies residues 414–454 (RKKLGMTTSTTPPPPRTPSPDAPLAQSPPIPRSPPSSTENA). The span at 424–447 (TPPPPRTPSPDAPLAQSPPIPRSP) shows a compositional bias: pro residues.

This sequence belongs to the PPP phosphatase family. PP-1 subfamily. The cofactor is Mn(2+).

The enzyme catalyses O-phospho-L-seryl-[protein] + H2O = L-seryl-[protein] + phosphate. It carries out the reaction O-phospho-L-threonyl-[protein] + H2O = L-threonyl-[protein] + phosphate. The sequence is that of Putative serine/threonine-protein phosphatase C27B7.6 from Caenorhabditis elegans.